The sequence spans 148 residues: Macrodomain Ter protein (148 aa).

Belongs to the MatP family. Homodimer.

It localises to the cytoplasm. Required for spatial organization of the terminus region of the chromosome (Ter macrodomain) during the cell cycle. Prevents early segregation of duplicated Ter macrodomains during cell division. Binds specifically to matS, which is a 13 bp signature motif repeated within the Ter macrodomain. This Pasteurella multocida (strain Pm70) protein is Macrodomain Ter protein.